The primary structure comprises 410 residues: Zinc finger TRAF-type-containing protein 1 (410 aa).

The span at 1 to 13 (MSGAEEAGGGGPA) shows a compositional bias: gly residues. The disordered stretch occupies residues 1–22 (MSGAEEAGGGGPAAGPAGSVPA). The RING-type; degenerate zinc-finger motif lies at 117-162 (CTVCLDLPKASVYQCTNGHLMCAGCFIHLLADARLKEEQATCPNCR). The segment at 158-231 (CPNCRCEISK…PWHGPFHELT (74 aa)) adopts a TRAF-type zinc-finger fold.

It belongs to the ZFTRAF1 family. In terms of assembly, interacts with LGALS3.

It localises to the cytoplasm. Its subcellular location is the perinuclear region. The protein is Zinc finger TRAF-type-containing protein 1 of Bos taurus (Bovine).